The following is an 80-amino-acid chain: Clavanin-C (80 aa).

A signal peptide spans 1–19; that stretch reads MKTTILILLILGLGINAKS. Residues 20–29 constitute a propeptide that is removed on maturation; it reads LEERKSEEEK. A Phenylalanine amide modification is found at F52. The propeptide occupies 54 to 80; the sequence is DDQQDNGKFYGHYAEDNGKHWYDTGDQ.

In terms of tissue distribution, hemocytes and pharyngeal tissues.

The protein localises to the secreted. Has antimicrobial activity against E.coli, L.monocytogenes and C.albicans. This is Clavanin-C from Styela clava (Sea squirt).